The primary structure comprises 156 residues: Small ribosomal subunit protein uS7 (156 aa).

Belongs to the universal ribosomal protein uS7 family. Part of the 30S ribosomal subunit. Contacts proteins S9 and S11.

In terms of biological role, one of the primary rRNA binding proteins, it binds directly to 16S rRNA where it nucleates assembly of the head domain of the 30S subunit. Is located at the subunit interface close to the decoding center, probably blocks exit of the E-site tRNA. The polypeptide is Small ribosomal subunit protein uS7 (Staphylococcus aureus (strain bovine RF122 / ET3-1)).